A 307-amino-acid polypeptide reads, in one-letter code: D-alanine--D-alanine ligase (307 aa).

An ATP-grasp domain is found at 101–301; it reads KTVMRAAGVD…FGELVRWMVE (201 aa). 127-182 is a binding site for ATP; that stretch reads PLPPPYVVKPIAEGSSVGVIIVRDGRSHPPQILASEEWTFGEQVLAEPYIAGRELT. 3 residues coordinate Mg(2+): D251, E268, and N270.

Belongs to the D-alanine--D-alanine ligase family. Requires Mg(2+) as cofactor. The cofactor is Mn(2+).

Its subcellular location is the cytoplasm. It catalyses the reaction 2 D-alanine + ATP = D-alanyl-D-alanine + ADP + phosphate + H(+). The protein operates within cell wall biogenesis; peptidoglycan biosynthesis. Cell wall formation. In Methylobacterium radiotolerans (strain ATCC 27329 / DSM 1819 / JCM 2831 / NBRC 15690 / NCIMB 10815 / 0-1), this protein is D-alanine--D-alanine ligase.